Consider the following 494-residue polypeptide: Ribose import ATP-binding protein RbsA (494 aa).

ABC transporter domains lie at 3–240 (IEMK…VGRS) and 250–494 (SQIS…TGGE). Residue 35-42 (GENGAGKS) participates in ATP binding.

It belongs to the ABC transporter superfamily. Ribose importer (TC 3.A.1.2.1) family. As to quaternary structure, the complex is composed of an ATP-binding protein (RbsA), two transmembrane proteins (RbsC) and a solute-binding protein (RbsB).

It localises to the cell membrane. The catalysed reaction is D-ribose(out) + ATP + H2O = D-ribose(in) + ADP + phosphate + H(+). In terms of biological role, part of the ABC transporter complex RbsABC involved in ribose import. Responsible for energy coupling to the transport system. The polypeptide is Ribose import ATP-binding protein RbsA (Bacillus cereus (strain ZK / E33L)).